Consider the following 267-residue polypeptide: Putative B3 domain-containing protein LOC_Os07g12820 (267 aa).

A DNA-binding region (TF-B3) is located at residues 4-99; that stretch reads PTFSMVKIKT…RLNVIIFNKE (96 aa).

Its subcellular location is the nucleus. This Oryza sativa subsp. japonica (Rice) protein is Putative B3 domain-containing protein LOC_Os07g12820.